The chain runs to 229 residues: Urease accessory protein UreF (229 aa).

This sequence belongs to the UreF family. In terms of assembly, ureD, UreF and UreG form a complex that acts as a GTP-hydrolysis-dependent molecular chaperone, activating the urease apoprotein by helping to assemble the nickel containing metallocenter of UreC. The UreE protein probably delivers the nickel.

It localises to the cytoplasm. In terms of biological role, required for maturation of urease via the functional incorporation of the urease nickel metallocenter. This Methylobacterium radiotolerans (strain ATCC 27329 / DSM 1819 / JCM 2831 / NBRC 15690 / NCIMB 10815 / 0-1) protein is Urease accessory protein UreF.